We begin with the raw amino-acid sequence, 354 residues long: MTIALGRFTKEEEKDLFDIMDDWLRRDRFVFVGWSGLLLFPCAYFALGGWFTGTTFVTSWYTHGLASSYLEGCNFLTAAVSTPANSLAHSLLLLWGPEAQGDFTRWCQLGGLWTFVALHGAFALIGFMLRQFELARSVQLRPYNAIAFSGPIAVFVSVFLIYPLGQSGWFFAPSFGVAAIFRFILFFQGFHNWTLNPFHMMGVAGVLGAALLCAIHGATVENTLFEDGDGANTFRAFNPTQAEETYSMVTANRFWSQIFGVAFSNKRWLHFFMLFVPVTGLWMSALGVVGLALNLRAYDFVSQEIRAAEDPEFETFYTKNILLNEGIRAWMAAQDQPHENLVFPEEVLPRGNAL.

Thr-2 bears the N-acetylthreonine mark. Thr-2 carries the phosphothreonine modification. A helical transmembrane segment spans residues Cys-42–Thr-62. Chlorophyll a is bound at residue His-119. The chain crosses the membrane as a helical span at residues Gly-126–Pro-142. Pheophytin a is bound by residues Gln-131 and Asn-144. The helical transmembrane segment at Val-154 to Ser-167 threads the bilayer. His-199 serves as a coordination point for chlorophyll a. The helical transmembrane segment at Ala-209 to Asp-229 threads the bilayer. Residues His-216 and Phe-263 each contribute to the a plastoquinone site. His-216 contributes to the Fe cation binding site. His-270 provides a ligand contact to Fe cation. Residues Gly-280 to Arg-296 traverse the membrane as a helical segment.

Belongs to the reaction center PufL/M/PsbA/D family. In terms of assembly, PSII is composed of 1 copy each of membrane proteins PsbA, PsbB, PsbC, PsbD, PsbE, PsbF, PsbH, PsbI, PsbJ, PsbK, PsbL, PsbM, PsbT, PsbX, PsbY, PsbZ, Psb30/Ycf12, at least 3 peripheral proteins of the oxygen-evolving complex and a large number of cofactors. It forms dimeric complexes. The D1/D2 heterodimer binds P680, chlorophylls that are the primary electron donor of PSII, and subsequent electron acceptors. It shares a non-heme iron and each subunit binds pheophytin, quinone, additional chlorophylls, carotenoids and lipids. There is also a Cl(-1) ion associated with D1 and D2, which is required for oxygen evolution. The PSII complex binds additional chlorophylls, carotenoids and specific lipids. serves as cofactor.

The protein resides in the plastid. It localises to the chloroplast thylakoid membrane. It catalyses the reaction 2 a plastoquinone + 4 hnu + 2 H2O = 2 a plastoquinol + O2. Functionally, photosystem II (PSII) is a light-driven water:plastoquinone oxidoreductase that uses light energy to abstract electrons from H(2)O, generating O(2) and a proton gradient subsequently used for ATP formation. It consists of a core antenna complex that captures photons, and an electron transfer chain that converts photonic excitation into a charge separation. The D1/D2 (PsbA/PsbD) reaction center heterodimer binds P680, the primary electron donor of PSII as well as several subsequent electron acceptors. D2 is needed for assembly of a stable PSII complex. The chain is Photosystem II D2 protein from Piper cenocladum (Ant piper).